The chain runs to 264 residues: Diphthine synthase (264 aa).

Residues L10, D87, V90, 115–116 (SI), L166, A209, and H234 each bind S-adenosyl-L-methionine.

This sequence belongs to the diphthine synthase family. Homodimer.

The enzyme catalyses 2-[(3S)-amino-3-carboxypropyl]-L-histidyl-[translation elongation factor 2] + 3 S-adenosyl-L-methionine = diphthine-[translation elongation factor 2] + 3 S-adenosyl-L-homocysteine + 3 H(+). The protein operates within protein modification; peptidyl-diphthamide biosynthesis. Functionally, S-adenosyl-L-methionine-dependent methyltransferase that catalyzes the trimethylation of the amino group of the modified target histidine residue in translation elongation factor 2 (EF-2), to form an intermediate called diphthine. The three successive methylation reactions represent the second step of diphthamide biosynthesis. The chain is Diphthine synthase from Thermococcus gammatolerans (strain DSM 15229 / JCM 11827 / EJ3).